We begin with the raw amino-acid sequence, 139 residues long: Large ribosomal subunit protein uL16 (139 aa).

This sequence belongs to the universal ribosomal protein uL16 family. Part of the 50S ribosomal subunit.

Its function is as follows. Binds 23S rRNA and is also seen to make contacts with the A and possibly P site tRNAs. The chain is Large ribosomal subunit protein uL16 from Chlorobium luteolum (strain DSM 273 / BCRC 81028 / 2530) (Pelodictyon luteolum).